The primary structure comprises 367 residues: Putrescine/agmatine-binding protein (367 aa).

The N-terminal stretch at 1-19 is a signal peptide; sequence MKKVCALALSILTTIGATA.

It belongs to the bacterial solute-binding protein 1 family.

It localises to the periplasm. Binds putrescine and agmatine. The protein is Putrescine/agmatine-binding protein of Pseudomonas aeruginosa (strain ATCC 15692 / DSM 22644 / CIP 104116 / JCM 14847 / LMG 12228 / 1C / PRS 101 / PAO1).